Consider the following 332-residue polypeptide: 2,3-diketo-L-gulonate reductase (332 aa).

His-44 functions as the Proton donor in the catalytic mechanism. Residues 168–174 (ITMVDMS), 224–225 (WK), and 304–306 (GHE) each bind NAD(+).

It belongs to the LDH2/MDH2 oxidoreductase family. DlgD subfamily. Homodimer.

The protein resides in the cytoplasm. The catalysed reaction is 3-dehydro-L-gulonate + NAD(+) = 2,3-dioxo-L-gulonate + NADH + H(+). It carries out the reaction 3-dehydro-L-gulonate + NADP(+) = 2,3-dioxo-L-gulonate + NADPH + H(+). Its function is as follows. Catalyzes the reduction of 2,3-diketo-L-gulonate in the presence of NADH, to form 3-keto-L-gulonate. The chain is 2,3-diketo-L-gulonate reductase from Salmonella agona (strain SL483).